A 329-amino-acid chain; its full sequence is Thiamine thiazole synthase (329 aa).

Substrate-binding positions include Cys86, 107–108 (EA), Gly115, and Val180. A 2,3-didehydroalanine (Cys) modification is found at Cys218. Substrate is bound by residues Asp220, His235, Met287, and 297 to 299 (RMG).

It belongs to the THI4 family. As to quaternary structure, homooctamer. The cofactor is Fe cation. During the catalytic reaction, a sulfide is transferred from Cys-218 to a reaction intermediate, generating a dehydroalanine residue.

The protein localises to the cytoplasm. Its subcellular location is the nucleus. The catalysed reaction is [ADP-thiazole synthase]-L-cysteine + glycine + NAD(+) = [ADP-thiazole synthase]-dehydroalanine + ADP-5-ethyl-4-methylthiazole-2-carboxylate + nicotinamide + 3 H2O + 2 H(+). Its function is as follows. Involved in biosynthesis of the thiamine precursor thiazole. Catalyzes the conversion of NAD and glycine to adenosine diphosphate 5-(2-hydroxyethyl)-4-methylthiazole-2-carboxylic acid (ADT), an adenylated thiazole intermediate. The reaction includes an iron-dependent sulfide transfer from a conserved cysteine residue of the protein to a thiazole intermediate. The enzyme can only undergo a single turnover, which suggests it is a suicide enzyme. May have additional roles in adaptation to various stress conditions and in DNA damage tolerance. The polypeptide is Thiamine thiazole synthase (Phaeosphaeria nodorum (strain SN15 / ATCC MYA-4574 / FGSC 10173) (Glume blotch fungus)).